Consider the following 165-residue polypeptide: Chorismate pyruvate-lyase (165 aa).

The substrate site is built by Met35, Arg77, Leu115, and Glu156.

This sequence belongs to the UbiC family. As to quaternary structure, monomer.

The protein resides in the cytoplasm. The enzyme catalyses chorismate = 4-hydroxybenzoate + pyruvate. Its pathway is cofactor biosynthesis; ubiquinone biosynthesis. In terms of biological role, removes the pyruvyl group from chorismate, with concomitant aromatization of the ring, to provide 4-hydroxybenzoate (4HB) for the ubiquinone pathway. The polypeptide is Chorismate pyruvate-lyase (Escherichia coli O127:H6 (strain E2348/69 / EPEC)).